A 156-amino-acid chain; its full sequence is Endoribonuclease YbeY (156 aa).

3 residues coordinate Zn(2+): His122, His126, and His132.

Belongs to the endoribonuclease YbeY family. Requires Zn(2+) as cofactor.

The protein localises to the cytoplasm. Its function is as follows. Single strand-specific metallo-endoribonuclease involved in late-stage 70S ribosome quality control and in maturation of the 3' terminus of the 16S rRNA. In Bacillus cereus (strain ATCC 10987 / NRS 248), this protein is Endoribonuclease YbeY.